Consider the following 147-residue polypeptide: Large ribosomal subunit protein uL16 (147 aa).

Belongs to the universal ribosomal protein uL16 family. Part of the 50S ribosomal subunit.

Its function is as follows. Binds 23S rRNA and is also seen to make contacts with the A and possibly P site tRNAs. The chain is Large ribosomal subunit protein uL16 from Clostridium tetani (strain Massachusetts / E88).